We begin with the raw amino-acid sequence, 551 residues long: MDFRRYFLWGALFISGYLLFLQWSQDYGPQSTQSVAQSTQSQSETNSQMSDDLPMATQSTTEANAEIPQSVTKIAPGKLIEVTTDTLRVAINPVGGDLVEAALLQYKKELGQPDPFVILEDGSERTYVTQSGLVGQDGPDASPEGRPVYQSEKTAYTLADGENSLDVNLYYTDAKGVKYTKTFRFMKGKYRIRQLITVDNTSSNTWRGNLFAQIKRDNTPDPSKATSMGLQPYLGGAISDEQTKYTKVSFSDMKEDPIKTTTTKGWVAVLQHYFVSAWIPEQGQKVTLQARTNGDFNIIGFTGTSVEIAPGKQGTLSSTFYVGPKLQDHLESTAENLDLTVDYGWLWWLAKPLFWLLTLIQSFVINWGIAIILIVVCVKAIFFKLSAASYRSMAKMRKFGPEIAKLKEKYGDDRQKMSQEMMALYKKEKINPLGGCLPILVQMPVFLSLYWVLMESVELRHAPFFLWIHDLSVMDPYFILPILMGISMFVQQSLNPTPPDPMQARIMKIMPVAFSIFFLWFPAGLVLYWVTNNTLSILQQYVITKRIENEA.

Residues 6 to 26 (YFLWGALFISGYLLFLQWSQD) form a helical membrane-spanning segment. The segment covering 34-50 (SVAQSTQSQSETNSQMS) has biased composition (low complexity). The disordered stretch occupies residues 34 to 68 (SVAQSTQSQSETNSQMSDDLPMATQSTTEANAEIP). The span at 56–68 (ATQSTTEANAEIP) shows a compositional bias: polar residues. The next 5 helical transmembrane spans lie at 340–360 (TVDY…LTLI), 363–383 (FVIN…AIFF), 433–453 (LGGC…YWVL), 464–484 (FFLW…PILM), and 509–529 (IMPV…VLYW).

The protein belongs to the OXA1/ALB3/YidC family. Type 1 subfamily. Interacts with the Sec translocase complex via SecD. Specifically interacts with transmembrane segments of nascent integral membrane proteins during membrane integration.

Its subcellular location is the cell inner membrane. Its function is as follows. Required for the insertion and/or proper folding and/or complex formation of integral membrane proteins into the membrane. Involved in integration of membrane proteins that insert both dependently and independently of the Sec translocase complex, as well as at least some lipoproteins. Aids folding of multispanning membrane proteins. The polypeptide is Membrane protein insertase YidC (Marinomonas sp. (strain MWYL1)).